The sequence spans 364 residues: Histidinol-phosphate aminotransferase (364 aa).

Lys226 is subject to N6-(pyridoxal phosphate)lysine.

It belongs to the class-II pyridoxal-phosphate-dependent aminotransferase family. Histidinol-phosphate aminotransferase subfamily. In terms of assembly, homodimer. Pyridoxal 5'-phosphate is required as a cofactor.

It carries out the reaction L-histidinol phosphate + 2-oxoglutarate = 3-(imidazol-4-yl)-2-oxopropyl phosphate + L-glutamate. It functions in the pathway amino-acid biosynthesis; L-histidine biosynthesis; L-histidine from 5-phospho-alpha-D-ribose 1-diphosphate: step 7/9. The polypeptide is Histidinol-phosphate aminotransferase (Campylobacter jejuni subsp. jejuni serotype O:2 (strain ATCC 700819 / NCTC 11168)).